We begin with the raw amino-acid sequence, 151 residues long: Small ribosomal subunit protein uS9 (151 aa).

Belongs to the universal ribosomal protein uS9 family.

This Aeropyrum pernix (strain ATCC 700893 / DSM 11879 / JCM 9820 / NBRC 100138 / K1) protein is Small ribosomal subunit protein uS9 (rps9).